A 124-amino-acid polypeptide reads, in one-letter code: Large ribosomal subunit protein bL21 (124 aa).

This sequence belongs to the bacterial ribosomal protein bL21 family. In terms of assembly, part of the 50S ribosomal subunit. Contacts protein L20.

This protein binds to 23S rRNA in the presence of protein L20. This chain is Large ribosomal subunit protein bL21, found in Synechocystis sp. (strain ATCC 27184 / PCC 6803 / Kazusa).